Reading from the N-terminus, the 170-residue chain is CDP-archaeol synthase (170 aa).

The next 5 helical transmembrane spans lie at 9-29 (AFWY…LGGG), 53-73 (GFFG…FLLP), 79-99 (LGIA…GDLI), 114-134 (PAVG…AYPV), and 140-160 (GEVL…NIFA).

It belongs to the CDP-archaeol synthase family. The cofactor is Mg(2+).

The protein resides in the cell membrane. The enzyme catalyses 2,3-bis-O-(geranylgeranyl)-sn-glycerol 1-phosphate + CTP + H(+) = CDP-2,3-bis-O-(geranylgeranyl)-sn-glycerol + diphosphate. It participates in membrane lipid metabolism; glycerophospholipid metabolism. In terms of biological role, catalyzes the formation of CDP-2,3-bis-(O-geranylgeranyl)-sn-glycerol (CDP-archaeol) from 2,3-bis-(O-geranylgeranyl)-sn-glycerol 1-phosphate (DGGGP) and CTP. This reaction is the third ether-bond-formation step in the biosynthesis of archaeal membrane lipids. This is CDP-archaeol synthase from Pyrococcus horikoshii (strain ATCC 700860 / DSM 12428 / JCM 9974 / NBRC 100139 / OT-3).